The primary structure comprises 485 residues: MTITPQQLIALLPLLIVGLTVVVVMLSIAWRRNHFVNATLAVVGLNLALFSLYFVGQAGPMDVTPLLRIDAYSMFYTGLVILASLATCTFAYPWLATYPDNREEFYLLVLIAALGGVVLASASHLASLFIGIELISLPLFGLVGYAFQQKRSLEAAIKYTILSAAASSFLLFGMALVYADSGNLGFMALGRSLNDDVIHQPLLLAGLGLMIVGFGFKLSLVPFHLWTPDVYQGAPAPVSTFLATASKIAIFGVLMRLFMYAPMANSEGVRTVLGIIAVASMLFGNLMAISQSNIKRLLGYSSIAHLGYLLVALIAVQSQQLSVETVGVYLAGYLFSSLGAFGVVSLMSSPYRGPDAESLYSYRGLFWHRPILAAVMTVMMLSLAGIPMTLGFIGKFYVIAVGVNAHLWWLTGAVVLGSAIGLYYYLRMTVSLYLSPPELMQRDSPANWAFTAGGVVVLISAILVLVLGIYPQPLISLVNLAQPLH.

Transmembrane regions (helical) follow at residues 8-28 (LIAL…MLSI), 35-55 (FVNA…LYFV), 75-95 (FYTG…YPWL), 105-125 (FYLL…ASHL), 127-147 (SLFI…GYAF), 159-179 (YTIL…LVYA), 203-223 (LLAG…LVPF), 235-255 (PAPV…GVLM), 271-291 (TVLG…AISQ), 297-317 (LLGY…IAVQ), 326-346 (VGVY…VVSL), 373-393 (AAVM…LGFI), 408-427 (WWLT…YYLR), and 449-469 (AFTA…VLGI).

Belongs to the complex I subunit 2 family. NDH-1 is composed of 13 different subunits. Subunits NuoA, H, J, K, L, M, N constitute the membrane sector of the complex.

It is found in the cell inner membrane. It carries out the reaction a quinone + NADH + 5 H(+)(in) = a quinol + NAD(+) + 4 H(+)(out). Its function is as follows. NDH-1 shuttles electrons from NADH, via FMN and iron-sulfur (Fe-S) centers, to quinones in the respiratory chain. The immediate electron acceptor for the enzyme in this species is believed to be ubiquinone. Couples the redox reaction to proton translocation (for every two electrons transferred, four hydrogen ions are translocated across the cytoplasmic membrane), and thus conserves the redox energy in a proton gradient. The sequence is that of NADH-quinone oxidoreductase subunit N from Erwinia tasmaniensis (strain DSM 17950 / CFBP 7177 / CIP 109463 / NCPPB 4357 / Et1/99).